The following is a 206-amino-acid chain: dITP/XTP pyrophosphatase (206 aa).

7 to 12 (SSHGYK) lines the substrate pocket. Asp-70 serves as the catalytic Proton acceptor. A Mg(2+)-binding site is contributed by Asp-70. Substrate contacts are provided by residues Thr-71, 154 to 157 (FGYD), Lys-177, and 182 to 183 (HR).

The protein belongs to the HAM1 NTPase family. As to quaternary structure, homodimer. It depends on Mg(2+) as a cofactor.

It catalyses the reaction XTP + H2O = XMP + diphosphate + H(+). The enzyme catalyses dITP + H2O = dIMP + diphosphate + H(+). It carries out the reaction ITP + H2O = IMP + diphosphate + H(+). Functionally, pyrophosphatase that catalyzes the hydrolysis of nucleoside triphosphates to their monophosphate derivatives, with a high preference for the non-canonical purine nucleotides XTP (xanthosine triphosphate), dITP (deoxyinosine triphosphate) and ITP. Seems to function as a house-cleaning enzyme that removes non-canonical purine nucleotides from the nucleotide pool, thus preventing their incorporation into DNA/RNA and avoiding chromosomal lesions. This is dITP/XTP pyrophosphatase from Chlamydia pneumoniae (Chlamydophila pneumoniae).